Here is a 759-residue protein sequence, read N- to C-terminus: GTPase-activating protein rrc-1 (759 aa).

The 80-residue stretch at 164–243 folds into the SH3 domain; that stretch reads PAIAAAVVTK…PRDCVMLIDD (80 aa). Positions 280 to 473 constitute a Rho-GAP domain; the sequence is LELTDLYMRT…FFIENSESLF (194 aa). The disordered stretch occupies residues 591-624; that stretch reads ARSMRPTSRPPPSPRTRRARFSNGSSNNVQKLNE. Over residues 612–622 the composition is skewed to polar residues; it reads SNGSSNNVQKL.

Expressed in coelomocytes, excretory cells, uterine-seam cells and GLR cells.

Functionally, functions as a GTPase-activating protein (GAP) for ced-10/rac-1 and CDC42. The chain is GTPase-activating protein rrc-1 (rrc-1) from Caenorhabditis elegans.